A 189-amino-acid chain; its full sequence is HGPRTase-like protein (189 aa).

Belongs to the purine/pyrimidine phosphoribosyltransferase family. Archaeal HPRT subfamily.

May catalyze a purine salvage reaction, the substrate is unknown. This is HGPRTase-like protein from Halorubrum lacusprofundi (strain ATCC 49239 / DSM 5036 / JCM 8891 / ACAM 34).